The chain runs to 148 residues: UPF0735 ACT domain-containing protein Dred_1164 (148 aa).

The region spanning threonine 72–glutamine 147 is the ACT domain.

Belongs to the UPF0735 family.

This is UPF0735 ACT domain-containing protein Dred_1164 from Desulforamulus reducens (strain ATCC BAA-1160 / DSM 100696 / MI-1) (Desulfotomaculum reducens).